A 226-amino-acid chain; its full sequence is Small ribosomal subunit protein uS3 (226 aa).

Residues 39 to 107 (VRNFIRKKLA…PVHINIEEIR (69 aa)) enclose the KH type-2 domain.

This sequence belongs to the universal ribosomal protein uS3 family. In terms of assembly, part of the 30S ribosomal subunit. Forms a tight complex with proteins S10 and S14.

Its function is as follows. Binds the lower part of the 30S subunit head. Binds mRNA in the 70S ribosome, positioning it for translation. The chain is Small ribosomal subunit protein uS3 from Alkalilimnicola ehrlichii (strain ATCC BAA-1101 / DSM 17681 / MLHE-1).